The following is an 81-amino-acid chain: Small ribosomal subunit protein bS16 (81 aa).

The protein belongs to the bacterial ribosomal protein bS16 family.

The polypeptide is Small ribosomal subunit protein bS16 (Colwellia psychrerythraea (strain 34H / ATCC BAA-681) (Vibrio psychroerythus)).